Reading from the N-terminus, the 228-residue chain is Extracellular protease inhibitor 10 (228 aa).

Residues 1 to 22 form the signal peptide; it reads MKSAFTLSLALVAVTATISAAA. Kazal-like domains follow at residues 23-72, 90-127, and 156-208; these read DDNC…ECAS, TSGT…AKCK, and GYQG…EGTL. N-linked (GlcNAc...) asparagine glycosylation is present at Asn-25. Cystine bridges form between Cys-26–Cys-56, Cys-30–Cys-49, and Cys-38–Cys-70. The interval 69–92 is disordered; sequence ECASTPASSATPSPVTSSTGSTSG. Residues 71 to 92 are compositionally biased toward low complexity; the sequence is ASTPASSATPSPVTSSTGSTSG. Cystine bridges form between Cys-96/Cys-126, Cys-100/Cys-119, Cys-162/Cys-193, and Cys-167/Cys-186. A glycan (N-linked (GlcNAc...) asparagine) is linked at Asn-199.

Interacts with host subtilisin-like protease P69B.

Its subcellular location is the secreted. Functionally, secreted effector that interacts with and inhibits the pathogenesis-related P69B subtilisin-like serine protease of host tomato. Inhibition of host proteases by a pathogen extracellular protease inhibitor forms a specific type of defense-counterdefense mechanism between plants and microbial pathogens. In Phytophthora infestans (strain T30-4) (Potato late blight agent), this protein is Extracellular protease inhibitor 10.